Reading from the N-terminus, the 337-residue chain is Formamidase (337 aa).

The CN hydrolase domain occupies 14 to 257 (VVIGLVQLQL…DEIITAEVRP (244 aa)). The active-site Proton acceptor is glutamate 60. Lysine 129 serves as the catalytic Proton donor. The Nucleophile role is filled by cysteine 162.

This sequence belongs to the carbon-nitrogen hydrolase superfamily. Aliphatic amidase family.

It carries out the reaction formamide + H2O = formate + NH4(+). Its function is as follows. Is an aliphatic amidase with a restricted substrate specificity, as it only hydrolyzes formamide. The protein is Formamidase of Bradyrhizobium sp. (strain ORS 278).